The sequence spans 427 residues: Histidinol dehydrogenase (427 aa).

Substrate contacts are provided by S232, Q254, and H257. Residues Q254 and H257 each contribute to the Zn(2+) site. Catalysis depends on proton acceptor residues E322 and H323. 4 residues coordinate substrate: H323, D356, E410, and H415. A Zn(2+)-binding site is contributed by D356. Zn(2+) is bound at residue H415.

Belongs to the histidinol dehydrogenase family. The cofactor is Zn(2+).

It carries out the reaction L-histidinol + 2 NAD(+) + H2O = L-histidine + 2 NADH + 3 H(+). The protein operates within amino-acid biosynthesis; L-histidine biosynthesis; L-histidine from 5-phospho-alpha-D-ribose 1-diphosphate: step 9/9. Functionally, catalyzes the sequential NAD-dependent oxidations of L-histidinol to L-histidinaldehyde and then to L-histidine. The polypeptide is Histidinol dehydrogenase (Listeria innocua serovar 6a (strain ATCC BAA-680 / CLIP 11262)).